We begin with the raw amino-acid sequence, 123 residues long: MSRRTERVASLLQHELGAIFQLELPRTPIVTIVEVKVTVDLGIARVYISTIGTPEEQAAIMAHLQEQNKYIRKLLSQRIRHQFRRIPELEFYEDHLYEHARHIEQLLSQVRKAPVDDAETPLD.

It belongs to the RbfA family. As to quaternary structure, monomer. Binds 30S ribosomal subunits, but not 50S ribosomal subunits or 70S ribosomes.

Its subcellular location is the cytoplasm. In terms of biological role, one of several proteins that assist in the late maturation steps of the functional core of the 30S ribosomal subunit. Associates with free 30S ribosomal subunits (but not with 30S subunits that are part of 70S ribosomes or polysomes). Required for efficient processing of 16S rRNA. May interact with the 5'-terminal helix region of 16S rRNA. This is Ribosome-binding factor A from Chlorobium chlorochromatii (strain CaD3).